A 167-amino-acid chain; its full sequence is MALLSLITPDFGLFFWQTVIFLVTLYLLSKFAWGPIMSAMKEREDSITDALSAADKARADIEKLQATNEALLAEARIERDKILADAHKAATTMMEDAKVKASTEGNRLMEAARVSIQTEKNAALHEVKNYAATLAVEIAEKILRKELNNAEEQKKLVSEYIKEVNLN.

The helical transmembrane segment at 15–37 (FWQTVIFLVTLYLLSKFAWGPIM) threads the bilayer.

It belongs to the ATPase B chain family. In terms of assembly, F-type ATPases have 2 components, F(1) - the catalytic core - and F(0) - the membrane proton channel. F(1) has five subunits: alpha(3), beta(3), gamma(1), delta(1), epsilon(1). F(0) has three main subunits: a(1), b(2) and c(10-14). The alpha and beta chains form an alternating ring which encloses part of the gamma chain. F(1) is attached to F(0) by a central stalk formed by the gamma and epsilon chains, while a peripheral stalk is formed by the delta and b chains.

The protein localises to the cell inner membrane. F(1)F(0) ATP synthase produces ATP from ADP in the presence of a proton or sodium gradient. F-type ATPases consist of two structural domains, F(1) containing the extramembraneous catalytic core and F(0) containing the membrane proton channel, linked together by a central stalk and a peripheral stalk. During catalysis, ATP synthesis in the catalytic domain of F(1) is coupled via a rotary mechanism of the central stalk subunits to proton translocation. Functionally, component of the F(0) channel, it forms part of the peripheral stalk, linking F(1) to F(0). This chain is ATP synthase subunit b, found in Cytophaga hutchinsonii (strain ATCC 33406 / DSM 1761 / CIP 103989 / NBRC 15051 / NCIMB 9469 / D465).